A 394-amino-acid chain; its full sequence is Elongation factor Tu, mitochondrial (394 aa).

A tr-type G domain is found at 10 to 204; it reads KPHCNIGTIG…AVDNYIPQPE (195 aa). Residues 19–26 form a G1 region; sequence GHVDHGKT. Residue 19-26 coordinates GTP; it reads GHVDHGKT. Positions 60–64 are G2; that stretch reads GITIS. Residues 81-84 form a G3 region; that stretch reads DCPG. GTP is bound by residues 81 to 85 and 136 to 139; these read DCPGH and NKVD. The G4 stretch occupies residues 136–139; the sequence is NKVD. A G5 region spans residues 174-176; it reads SAL.

The protein belongs to the TRAFAC class translation factor GTPase superfamily. Classic translation factor GTPase family. EF-Tu/EF-1A subfamily.

Its subcellular location is the mitochondrion. This protein promotes the GTP-dependent binding of aminoacyl-tRNA to the A-site of ribosomes during protein biosynthesis. This is Elongation factor Tu, mitochondrial (TUFA) from Reclinomonas americana.